The chain runs to 546 residues: UDP-glycosyltransferase FPY2 (546 aa).

The N-terminal stretch at 1–20 is a signal peptide; it reads MSLPKAQILVVVTVGGSTNS. A helical membrane pass occupies residues 517–537; that stretch reads LNNIDVALLFFILLGIISWIT.

The protein belongs to the glycosyltransferase 28 family.

It localises to the membrane. The protein operates within secondary metabolite biosynthesis. Its function is as follows. UDP-glycosyltransferase; part of the gene cluster that mediates the biosynthesis of the gamma-pyrones fusapyrone (FPY) and deoxyfusapyrone (dFPY). FPY is an undecaketide and thus likely synthesized by the polyketide synthase FPY1 from acetyl-CoA functioning as starter unit and the addition of 10 malonyl-CoA extender units by successive Claisen-condensations. Next to this, FPY shares some rare features: C-glycosylated 4-deoxyglucose at C-3, a gem-dimethyl group at C-13, and an alpha-beta to beta-gamma double bond shift at C-20. During FPY biosynthesis mono-C-methyl groups are transferred to the tetra-, penta-, hexa- and heptaketide, while two C-methyl groups are transferred to the nonaketide, suggesting that the CMet domain is programmed to selectively catalyze two successive C-alpha-methylation reactions of the nonaketide, while other alpha-carbons are non- or mono-methylated only. While the origin of the 4'-deoxyglucose moiety remains opaque, its transfer to C-3 is most likely mediated by the C-glycosyltransferase FPY2. Next to this, the hydroxyl group present at C-33 and discriminating between FPY and dFPY, is likely to be installed by the cytochrome P450 monooxygenase FPY7. No putative function can be predicted for the remaining genes FPY3-FPY6. This Fusarium mangiferae (Mango malformation disease fungus) protein is UDP-glycosyltransferase FPY2.